We begin with the raw amino-acid sequence, 409 residues long: MAGWPAAEAAGALVVAILAAAAGGAAGKTTIEPCAGADTCAALLGYTLYADMKVSEVAALFGADPRAVLAANALDFASPGAANRILPAGLPLRVPTRCACSDGVRKSVAVRYSARPADTLASVADVVFAGLASADQIRTANGLSAEDPDAPLDAGATLVVPLPCACFNSTDNNLPAVYLSYVVRVGDTVQSIAATHATTVTDISNVNAMGSPIVAPGDILAIPLPACASMFPNSASDYGLLVANGTYALTAGNCVQCSCGPGDLKLYCTPASLTASCSSMQCPNSNLMLGNVTAQSTSGGCNVSSCSYAGLVNGTIATSLSSGLQPTCPGPHQFPPLRATPIAVNQGSYLAPSPAPGAGEAGGDIPGFPGSSNVSPANGPSGSVSQAASVNRPHQIVALILSVALYFQM.

An N-terminal signal peptide occupies residues 1–27 (MAGWPAAEAAGALVVAILAAAAGGAAG). Disulfide bonds link C34–C100, C40–C166, C98–C164, and C100–C166. In terms of domain architecture, LysM 1 spans 110-160 (VRYSARPADTLASVADVVFAGLASADQIRTANGLSAEDPDAPLDAGATLVV). N168 carries N-linked (GlcNAc...) asparagine glycosylation. The region spanning 179–222 (LSYVVRVGDTVQSIAATHATTVTDISNVNAMGSPIVAPGDILAI) is the LysM 2 domain. 2 disulfides stabilise this stretch: C227/C259 and C254/C282. N-linked (GlcNAc...) asparagine glycosylation occurs at N244. 3 N-linked (GlcNAc...) asparagine glycosylation sites follow: N291, N302, and N313. The disordered stretch occupies residues 353–387 (SPAPGAGEAGGDIPGFPGSSNVSPANGPSGSVSQA). The span at 370 to 387 (GSSNVSPANGPSGSVSQA) shows a compositional bias: polar residues. The GPI-anchor amidated alanine moiety is linked to residue A387. The propeptide at 388–409 (ASVNRPHQIVALILSVALYFQM) is removed in mature form.

In terms of assembly, interacts with LYP4. Interacts with CERK1. Interacts with CEBIP. Expressed in roots and leaves.

The protein resides in the cell membrane. Functionally, functions in innate immunity. Functions as a pattern recognition receptor (PRR), sensing bacterial peptidoglycan (PGN) and fungal chitin at the cell surface. Involved in resistance against the bacterial pathogen Xanthomonas oryzae pv. oryzae (Xoo) and the fungal pathogen Magnaporthe oryzae. Binds PGN and fungal chitin in vitro. Involved in microbe-associated molecular patterns (MAMPs) perception and participates in the activation of defense genes against the bacterial pathogen Xanthomonas oryzae pv. oryzicola (Xoc) or the fungal pathogen Magnaporthe oryzae. The chain is LysM domain-containing GPI-anchored protein LYP6 from Oryza sativa subsp. japonica (Rice).